A 347-amino-acid chain; its full sequence is MTPMTTLIMLFSLLLGTTLTLTSSHWLLMWMGLEVSTLAIIPLLTYTNHPRSIESAIKYFLTQATASMLLMFAASLNTWMTGHWTLMQIDNTISSGIMTFALAMKLGLAPFHYWVPEVLQGSSLMSGMILLTWQKLAPISIIYQISPTLNMDILLTLAISSTLLGGWNGLNQTQLRKVMAYSSIAHMGWMVLIIIYFPTLTTLNLTLYIMSTVALFTVFHTTNITKTKPLSLMWNKAPIMTLAIILLLLSLGGLPPLTGFAPKWLVIQELIKHDNMIMATVLAITALLNLFFYMRIIYSSTLTTFPTTNNNKFHWYSKSTKNPLSLPTLVILSTTLLPLTPMFITLS.

A run of 10 helical transmembrane segments spans residues 1–21 (MTPM…TLTL), 26–46 (WLLM…LLTY), 56–76 (AIKY…AASL), 96–116 (GIMT…YWVP), 153–171 (ILLT…NGLN), 178–198 (VMAY…IYFP), 199–219 (TLTT…FTVF), 237–257 (APIM…LPPL), 277–297 (IMAT…MRII), and 326–346 (LPTL…FITL).

Belongs to the complex I subunit 2 family. Core subunit of respiratory chain NADH dehydrogenase (Complex I) which is composed of 45 different subunits. Interacts with TMEM242.

The protein resides in the mitochondrion inner membrane. The catalysed reaction is a ubiquinone + NADH + 5 H(+)(in) = a ubiquinol + NAD(+) + 4 H(+)(out). Functionally, core subunit of the mitochondrial membrane respiratory chain NADH dehydrogenase (Complex I) which catalyzes electron transfer from NADH through the respiratory chain, using ubiquinone as an electron acceptor. Essential for the catalytic activity and assembly of complex I. The polypeptide is NADH-ubiquinone oxidoreductase chain 2 (Ornithorhynchus anatinus (Duckbill platypus)).